Reading from the N-terminus, the 375-residue chain is Pectate lyase B (375 aa).

An N-terminal signal peptide occupies residues 1–22 (MKSLITPIAAGLLLAFSQYSLA). A disulfide bridge connects residues Cys93 and Cys176. The Ca(2+) site is built by Asp150, Asp152, Glu187, and Asp191. Residue Arg240 is part of the active site. Cys351 and Cys374 are joined by a disulfide.

The protein belongs to the polysaccharide lyase 1 family. PLADES subfamily. It depends on Ca(2+) as a cofactor.

The protein localises to the secreted. The catalysed reaction is Eliminative cleavage of (1-&gt;4)-alpha-D-galacturonan to give oligosaccharides with 4-deoxy-alpha-D-galact-4-enuronosyl groups at their non-reducing ends.. The protein operates within glycan metabolism; pectin degradation; 2-dehydro-3-deoxy-D-gluconate from pectin: step 2/5. Functionally, involved in maceration and soft-rotting of plant tissue. The chain is Pectate lyase B (pelB) from Dickeya chrysanthemi (Pectobacterium chrysanthemi).